A 97-amino-acid polypeptide reads, in one-letter code: MKRISSDEVKKVAQLARLELNESEINQHAEQLEKILEYIKQLEKINTEDIPCTTRAIEVVNVLRKDEKKNYENSEEILDLAPSRENKFFKVPKIINE.

The protein belongs to the GatC family. As to quaternary structure, heterotrimer of A, B and C subunits.

The catalysed reaction is L-glutamyl-tRNA(Gln) + L-glutamine + ATP + H2O = L-glutaminyl-tRNA(Gln) + L-glutamate + ADP + phosphate + H(+). It carries out the reaction L-aspartyl-tRNA(Asn) + L-glutamine + ATP + H2O = L-asparaginyl-tRNA(Asn) + L-glutamate + ADP + phosphate + 2 H(+). In terms of biological role, allows the formation of correctly charged Asn-tRNA(Asn) or Gln-tRNA(Gln) through the transamidation of misacylated Asp-tRNA(Asn) or Glu-tRNA(Gln) in organisms which lack either or both of asparaginyl-tRNA or glutaminyl-tRNA synthetases. The reaction takes place in the presence of glutamine and ATP through an activated phospho-Asp-tRNA(Asn) or phospho-Glu-tRNA(Gln). This chain is Aspartyl/glutamyl-tRNA(Asn/Gln) amidotransferase subunit C, found in Prochlorococcus marinus subsp. pastoris (strain CCMP1986 / NIES-2087 / MED4).